A 425-amino-acid chain; its full sequence is Serine--tRNA ligase (425 aa).

228–230 contacts L-serine; it reads TAE. 259-261 contributes to the ATP binding site; the sequence is RSE. An L-serine-binding site is contributed by E282. ATP is bound at residue 346 to 349; that stretch reads EIAS. Position 382 (S382) interacts with L-serine.

This sequence belongs to the class-II aminoacyl-tRNA synthetase family. Type-1 seryl-tRNA synthetase subfamily. In terms of assembly, homodimer. The tRNA molecule binds across the dimer.

It is found in the cytoplasm. It carries out the reaction tRNA(Ser) + L-serine + ATP = L-seryl-tRNA(Ser) + AMP + diphosphate + H(+). The catalysed reaction is tRNA(Sec) + L-serine + ATP = L-seryl-tRNA(Sec) + AMP + diphosphate + H(+). Its pathway is aminoacyl-tRNA biosynthesis; selenocysteinyl-tRNA(Sec) biosynthesis; L-seryl-tRNA(Sec) from L-serine and tRNA(Sec): step 1/1. In terms of biological role, catalyzes the attachment of serine to tRNA(Ser). Is also able to aminoacylate tRNA(Sec) with serine, to form the misacylated tRNA L-seryl-tRNA(Sec), which will be further converted into selenocysteinyl-tRNA(Sec). This Rickettsia africae (strain ESF-5) protein is Serine--tRNA ligase.